The following is a 302-amino-acid chain: Methionyl-tRNA formyltransferase (302 aa).

108–111 (SLLP) contacts (6S)-5,6,7,8-tetrahydrofolate.

This sequence belongs to the Fmt family.

It catalyses the reaction L-methionyl-tRNA(fMet) + (6R)-10-formyltetrahydrofolate = N-formyl-L-methionyl-tRNA(fMet) + (6S)-5,6,7,8-tetrahydrofolate + H(+). Attaches a formyl group to the free amino group of methionyl-tRNA(fMet). The formyl group appears to play a dual role in the initiator identity of N-formylmethionyl-tRNA by promoting its recognition by IF2 and preventing the misappropriation of this tRNA by the elongation apparatus. The polypeptide is Methionyl-tRNA formyltransferase (Cereibacter sphaeroides (strain ATCC 17025 / ATH 2.4.3) (Rhodobacter sphaeroides)).